We begin with the raw amino-acid sequence, 282 residues long: Hydroxyacylglutathione hydrolase-like protein (282 aa).

Zn(2+) contacts are provided by histidine 54, histidine 56, aspartate 58, histidine 59, histidine 110, aspartate 134, and histidine 173.

This sequence belongs to the metallo-beta-lactamase superfamily. Glyoxalase II family. The cofactor is Zn(2+).

Functionally, hydrolase acting on ester bonds. This chain is Hydroxyacylglutathione hydrolase-like protein (HAGHL), found in Gallus gallus (Chicken).